A 662-amino-acid chain; its full sequence is 3',5'-cyclic-AMP phosphodiesterase, isoform F (662 aa).

Disordered stretches follow at residues Val-79–Gly-108 and Ser-207–Thr-245. The span at Pro-80 to Gly-98 shows a compositional bias: polar residues. In terms of domain architecture, PDEase spans Val-248–Ser-577. His-324 serves as the catalytic Proton donor. His-324–His-328 provides a ligand contact to 3',5'-cyclic AMP. His-328, His-364, Asp-365, and Asp-482 together coordinate a divalent metal cation. Residues Asp-365, Asp-482, and Gln-533 each coordinate 3',5'-cyclic AMP. Residues Glu-599–Gly-616 show a composition bias toward acidic residues. The tract at residues Glu-599–Met-662 is disordered. The span at Gly-617–Ser-634 shows a compositional bias: low complexity. A compositionally biased stretch (gly residues) spans Gly-635–Met-646. Residues Gly-652–Met-662 are compositionally biased toward polar residues.

It belongs to the cyclic nucleotide phosphodiesterase family. PDE4 subfamily. In terms of assembly, monomer. The cofactor is a divalent metal cation.

The catalysed reaction is 3',5'-cyclic AMP + H2O = AMP + H(+). It functions in the pathway purine metabolism; 3',5'-cyclic AMP degradation; AMP from 3',5'-cyclic AMP: step 1/1. Its function is as follows. Hydrolyzes the second messenger cAMP, which is a key regulator of many important physiological processes. Vital for female fertility. Required for learning/memory. In Drosophila melanogaster (Fruit fly), this protein is 3',5'-cyclic-AMP phosphodiesterase, isoform F.